Here is a 496-residue protein sequence, read N- to C-terminus: Putative aldehyde dehydrogenase-like protein C922.07c (496 aa).

241 to 246 (GSTKVG) is a binding site for NAD(+). The active-site Proton acceptor is Glu-263. Catalysis depends on Cys-297, which acts as the Nucleophile.

This sequence belongs to the aldehyde dehydrogenase family.

It localises to the cytoplasm. The protein localises to the nucleus. The polypeptide is Putative aldehyde dehydrogenase-like protein C922.07c (Schizosaccharomyces pombe (strain 972 / ATCC 24843) (Fission yeast)).